A 483-amino-acid polypeptide reads, in one-letter code: ATP synthase subunit beta (483 aa).

169 to 176 (GGAGVGKT) lines the ATP pocket.

The protein belongs to the ATPase alpha/beta chains family. In terms of assembly, F-type ATPases have 2 components, CF(1) - the catalytic core - and CF(0) - the membrane proton channel. CF(1) has five subunits: alpha(3), beta(3), gamma(1), delta(1), epsilon(1). CF(0) has three main subunits: a(1), b(2) and c(9-12). The alpha and beta chains form an alternating ring which encloses part of the gamma chain. CF(1) is attached to CF(0) by a central stalk formed by the gamma and epsilon chains, while a peripheral stalk is formed by the delta and b chains.

It localises to the cell membrane. The enzyme catalyses ATP + H2O + 4 H(+)(in) = ADP + phosphate + 5 H(+)(out). Produces ATP from ADP in the presence of a proton gradient across the membrane. The catalytic sites are hosted primarily by the beta subunits. The polypeptide is ATP synthase subunit beta (Rhodococcus jostii (strain RHA1)).